The sequence spans 251 residues: Probable transcriptional regulatory protein MRA_2631 (251 aa).

The protein belongs to the TACO1 family.

It localises to the cytoplasm. This chain is Probable transcriptional regulatory protein MRA_2631, found in Mycobacterium tuberculosis (strain ATCC 25177 / H37Ra).